The chain runs to 465 residues: Ribulose bisphosphate carboxylase large chain (465 aa).

Residue lysine 4 is modified to N6,N6,N6-trimethyllysine. Threonine 163 provides a ligand contact to substrate. The active-site Proton acceptor is lysine 165. Lysine 167 is a binding site for substrate. Lysine 191, aspartate 193, and glutamate 194 together coordinate Mg(2+). At lysine 191 the chain carries N6-carboxylysine. Histidine 284 (proton acceptor) is an active-site residue. 3 residues coordinate substrate: arginine 285, histidine 317, and serine 369.

It belongs to the RuBisCO large chain family. Type I subfamily. As to quaternary structure, heterohexadecamer of 8 large chains and 8 small chains; disulfide-linked. The disulfide link is formed within the large subunit homodimers. Mg(2+) serves as cofactor. Post-translationally, the disulfide bond which can form in the large chain dimeric partners within the hexadecamer appears to be associated with oxidative stress and protein turnover.

The protein resides in the plastid. The protein localises to the chloroplast. The enzyme catalyses 2 (2R)-3-phosphoglycerate + 2 H(+) = D-ribulose 1,5-bisphosphate + CO2 + H2O. It carries out the reaction D-ribulose 1,5-bisphosphate + O2 = 2-phosphoglycolate + (2R)-3-phosphoglycerate + 2 H(+). Functionally, ruBisCO catalyzes two reactions: the carboxylation of D-ribulose 1,5-bisphosphate, the primary event in carbon dioxide fixation, as well as the oxidative fragmentation of the pentose substrate in the photorespiration process. Both reactions occur simultaneously and in competition at the same active site. This Trochodendron aralioides (Wheel tree) protein is Ribulose bisphosphate carboxylase large chain.